The chain runs to 835 residues: MEPILINAQVQMWSAKAGMSKSRNALIETCVGKREVKLILYFSTGKIKTLQLHDNIKSVVLQTYGEDQNYLHLTFKNNDFLFVEKLTTTDARRLKRFLDKTSQGSIRPARSDERCGEPSTSAQELNGSGSSCETNSECFESPKESEMCMFRELSLLPSSSTFLHNVGLLENQFIKRKRFFSDLAKNEKQSNLKDSIRDFEANLVVCISNEKGKERNVREVDISKPGFGFPFETNYPEDSGVDVRDLNDLITKLFSPVLLETHCIENGLEWHEYMKTYLLYPEKLWQGLPNVGNTCYINVVLQSLCSIPLFINDLFNQGFPWIKAPKDDFNMLLMQLLVLKDIYNARFRQKLLIGITKALPIFGEIFAVDRQNDAHEFLSLCLVQLKETFQRVTMMWQSENDSGDFYLLKDIFADYATINKMPVCPVTNNFEFELLSSIFCKACGLTLFKGEPSRYLSINIPQGGKDMSIQSTLDLFFSAEELEHRCEKCLYNKSVSFHRFGRLPRVIIVHLKRYHFNESWVMKKDERPILVSKYLRLSCHCSKSTKPPPPLRPGEHVKNLDLLKPLEVLGSEILKLPFNSVRTSRSKGFETINITSNRESEAQSGKRVSEVLSGKVQQENSGKGDTAHIVGSELTKETEKLKKHEEEHRPSDLDSGSIREAQKYQQAEKCNEGRSDKQISLEALTQSRPKPISQEQTENLGKTTLSHTQDSSQSSQSSSDSSKSSRCSDDLDKKAKPTRKVDPTKLNKKEDNVYRLVNIINHIGNSPNGGHYINDAFDFKRQSWFTYSDLHVTRTQEDFVYRGRSSTGYVFFYMHNDIFEELLAKETQSTSTSKG.

The segment at 102–128 (SQGSIRPARSDERCGEPSTSAQELNGS) is disordered. Positions 118–128 (PSTSAQELNGS) are enriched in polar residues. In terms of domain architecture, USP spans 286–816 (QGLPNVGNTC…TGYVFFYMHN (531 aa)). The active-site Nucleophile is the Cys-295. The tract at residues 597–747 (NRESEAQSGK…TRKVDPTKLN (151 aa)) is disordered. Composition is skewed to basic and acidic residues over residues 634 to 652 (LTKE…RPSD) and 669 to 679 (KCNEGRSDKQI). Residues 683-708 (ALTQSRPKPISQEQTENLGKTTLSHT) show a composition bias toward polar residues. Residues 709 to 725 (QDSSQSSQSSSDSSKSS) are compositionally biased toward low complexity. A compositionally biased stretch (basic and acidic residues) spans 726 to 747 (RCSDDLDKKAKPTRKVDPTKLN). The Proton acceptor role is filled by His-771.

Belongs to the peptidase C19 family. In terms of assembly, interacts with RING1.

The protein resides in the nucleus. Its subcellular location is the cytoplasm. It localises to the cytoskeleton. The protein localises to the flagellum axoneme. It catalyses the reaction Thiol-dependent hydrolysis of ester, thioester, amide, peptide and isopeptide bonds formed by the C-terminal Gly of ubiquitin (a 76-residue protein attached to proteins as an intracellular targeting signal).. Functionally, deubiquitinase regulating several biological processes through the deubiquitination of components of these processes. Involved in somatic cell reprogramming through the 'Lys-48'-linked deubiquitination and stabilization of CBX4 and CBX6, two components of the polycomb-repressive complex 1 (PRC1). Also deubiquitinates and probably stabilizes the androgen receptor (AR), regulating the androgen receptor signaling pathway. May play a role in spermatogenesis. This Mus musculus (Mouse) protein is Ubiquitin carboxyl-terminal hydrolase 26.